We begin with the raw amino-acid sequence, 31 residues long: Photosystem I reaction center subunit XII (31 aa).

Residues 7-26 (QVYIALLTALIPAFFALKLG) traverse the membrane as a helical segment.

Belongs to the PsaM family.

It localises to the plastid. The protein resides in the chloroplast thylakoid membrane. The chain is Photosystem I reaction center subunit XII from Euglena viridis (Cercaria viridis).